The primary structure comprises 340 residues: Ferredoxin--NADP reductase (340 aa).

Aspartate 33, glutamine 41, tyrosine 46, alanine 86, phenylalanine 120, aspartate 286, and threonine 327 together coordinate FAD.

The protein belongs to the ferredoxin--NADP reductase type 2 family. Homodimer. It depends on FAD as a cofactor.

It catalyses the reaction 2 reduced [2Fe-2S]-[ferredoxin] + NADP(+) + H(+) = 2 oxidized [2Fe-2S]-[ferredoxin] + NADPH. The sequence is that of Ferredoxin--NADP reductase from Rickettsia conorii (strain ATCC VR-613 / Malish 7).